A 129-amino-acid polypeptide reads, in one-letter code: Putative membrane protein insertion efficiency factor (129 aa).

This sequence belongs to the UPF0161 family.

The protein resides in the cell inner membrane. In terms of biological role, could be involved in insertion of integral membrane proteins into the membrane. This chain is Putative membrane protein insertion efficiency factor, found in Rhodopseudomonas palustris (strain TIE-1).